A 643-amino-acid polypeptide reads, in one-letter code: Aspartic protease 3 (643 aa).

Residues methionine 1 to alanine 31 form the signal peptide. Positions alanine 87 to serine 99 are enriched in low complexity. Positions alanine 87–arginine 116 are disordered. Residues tyrosine 281 to alanine 600 enclose the Peptidase A1 domain. Catalysis depends on residues aspartate 299 and aspartate 490.

Belongs to the peptidase A1 family.

The protein localises to the endomembrane system. Inhibited by 49c, a hydroxyethylamine scaffold-based compound. In terms of biological role, required for the processing-mediated maturation of a subset of microneme proteins, such as MIC6, and rhoptry proteins, such as ROP1. By regulating microneme and rhoptry processing, plays an essential role in the lysis of the host cell membrane during egress and in rhoptry content discharge, which is required for invasion of host cells. This chain is Aspartic protease 3, found in Toxoplasma gondii.